Here is a 217-residue protein sequence, read N- to C-terminus: 3-demethoxyubiquinol 3-hydroxylase (217 aa).

Fe cation-binding residues include Glu-66, Glu-96, His-99, Glu-148, Glu-180, and His-183.

This sequence belongs to the COQ7 family. Fe cation is required as a cofactor.

It is found in the cell membrane. The enzyme catalyses a 5-methoxy-2-methyl-3-(all-trans-polyprenyl)benzene-1,4-diol + AH2 + O2 = a 3-demethylubiquinol + A + H2O. It functions in the pathway cofactor biosynthesis; ubiquinone biosynthesis. Its function is as follows. Catalyzes the hydroxylation of 2-nonaprenyl-3-methyl-6-methoxy-1,4-benzoquinol during ubiquinone biosynthesis. The protein is 3-demethoxyubiquinol 3-hydroxylase of Xylella fastidiosa (strain 9a5c).